A 254-amino-acid chain; its full sequence is UPF0328 protein ECU01_0070/ECU01_1540/ECU02_1570/ECU04_0080/ECU08_2100 (254 aa).

The protein belongs to the UPF0328 family.

This chain is UPF0328 protein ECU01_0070/ECU01_1540/ECU02_1570/ECU04_0080/ECU08_2100, found in Encephalitozoon cuniculi (strain GB-M1) (Microsporidian parasite).